Consider the following 82-residue polypeptide: Small ribosomal subunit protein bS16 (82 aa).

This sequence belongs to the bacterial ribosomal protein bS16 family.

This is Small ribosomal subunit protein bS16 from Salmonella agona (strain SL483).